We begin with the raw amino-acid sequence, 224 residues long: Artemin (224 aa).

An N-terminal signal peptide occupies residues 1 to 39 (MELGLAEPTALSHCLRPRWQSAWWPTLAVLALLSCVTEA). A propeptide spanning residues 40-111 (SLDPMSRSPA…AALRGARAAR (72 aa)) is cleaved from the precursor. The interval 43–124 (PMSRSPAARD…RSSRARTTDA (82 aa)) is disordered. Positions 80–95 (RPPPQSPQPAPPPPGP) are enriched in pro residues. Low complexity predominate over residues 96 to 116 (ALQSPPAALRGARAARAGTRS). Cystine bridges form between Cys-127–Cys-192, Cys-154–Cys-220, and Cys-158–Cys-222. A glycan (N-linked (GlcNAc...) asparagine) is linked at Asn-206.

This sequence belongs to the TGF-beta family. GDNF subfamily. In terms of assembly, homodimer; disulfide-linked. Interacts with GFRA3 coreceptor and RET: forms a 2:2:2 ternary complex composed of ARTN ligand, GFRA3 and RET receptor.

The protein localises to the secreted. Functionally, growth factor that supports the survival of sensory and sympathetic peripheral neurons in culture and also supports the survival of dopaminergic neurons of the ventral mid-brain. Acts by binding to its coreceptor, GFRA3, leading to autophosphorylation and activation of the RET receptor. Strong attractant of gut hematopoietic cells thus promoting the formation Peyer's patch-like structures, a major component of the gut-associated lymphoid tissue. The sequence is that of Artemin from Mus musculus (Mouse).